The primary structure comprises 321 residues: Lipoyl synthase (321 aa).

The [4Fe-4S] cluster site is built by cysteine 68, cysteine 73, cysteine 79, cysteine 94, cysteine 98, cysteine 101, and serine 308. Residues 80–297 (FNHGTATFMI…KVLADELGFT (218 aa)) enclose the Radical SAM core domain.

This sequence belongs to the radical SAM superfamily. Lipoyl synthase family. Requires [4Fe-4S] cluster as cofactor.

The protein resides in the cytoplasm. It carries out the reaction [[Fe-S] cluster scaffold protein carrying a second [4Fe-4S](2+) cluster] + N(6)-octanoyl-L-lysyl-[protein] + 2 oxidized [2Fe-2S]-[ferredoxin] + 2 S-adenosyl-L-methionine + 4 H(+) = [[Fe-S] cluster scaffold protein] + N(6)-[(R)-dihydrolipoyl]-L-lysyl-[protein] + 4 Fe(3+) + 2 hydrogen sulfide + 2 5'-deoxyadenosine + 2 L-methionine + 2 reduced [2Fe-2S]-[ferredoxin]. It participates in protein modification; protein lipoylation via endogenous pathway; protein N(6)-(lipoyl)lysine from octanoyl-[acyl-carrier-protein]: step 2/2. In terms of biological role, catalyzes the radical-mediated insertion of two sulfur atoms into the C-6 and C-8 positions of the octanoyl moiety bound to the lipoyl domains of lipoate-dependent enzymes, thereby converting the octanoylated domains into lipoylated derivatives. This Shewanella sp. (strain MR-7) protein is Lipoyl synthase.